The primary structure comprises 1161 residues: BMP-2-inducible protein kinase (1161 aa).

Residues 1 to 20 (MKKFSRMPKSEGGSGGGAAG) form a disordered region. Residue S14 is modified to Phosphoserine. Positions 51–316 (VTLEESLAEG…DIFQVSYFAF (266 aa)) constitute a Protein kinase domain. Residues 57–65 (LAEGGFSTV) and K79 contribute to the ATP site. The active-site Proton acceptor is D180. Disordered regions lie at residues 358–439 (TDTI…RVLQ), 453–495 (LQHR…HHHL), 610–630 (TNQK…FGED), and 655–832 (ERAS…TQDL). Residues 361-394 (IGPTETSIAPRQRPKANSATTATPSVLTIQSSAT) show a composition bias toward polar residues. 2 stretches are compositionally biased toward low complexity: residues 422-439 (LLGQ…RVLQ) and 460-485 (QQQQ…QQQQ). Positions 610 to 619 (TNQKNISNPP) are enriched in polar residues. At S689 the chain carries Phosphoserine. Composition is skewed to polar residues over residues 697-718 (SSIN…SPAS) and 726-735 (KTSVQGQVQK). S742 carries the post-translational modification Phosphoserine. Positions 755–779 (EEEEQDDEEVLQGEQGDFNDDDTEP) are enriched in acidic residues. Positions 798 to 813 (EKHSSDSDYEQAKAKY) are enriched in basic and acidic residues. A phosphoserine mark is found at S817 and S818. T834 carries the phosphothreonine modification. At S928 the chain carries Phosphoserine. Positions 965–1035 (SQQQKVKQRS…RRDSQSSNEF (71 aa)) are disordered. Residues 970–984 (VKQRSLQKLSSRQRR) are compositionally biased toward basic residues. Over residues 1000–1011 (TPTSTKKTLKPT) the composition is skewed to low complexity. Phosphoserine occurs at positions 1029, 1031, 1032, 1039, 1041, 1076, 1107, and 1111. Positions 1137–1146 (TPHQSQQSQP) are enriched in polar residues. The segment at 1137-1161 (TPHQSQQSQPVELDPFGAAPFPSKQ) is disordered.

It belongs to the protein kinase superfamily. Ser/Thr protein kinase family. Post-translationally, autophosphorylated.

It is found in the nucleus. The enzyme catalyses L-seryl-[protein] + ATP = O-phospho-L-seryl-[protein] + ADP + H(+). The catalysed reaction is L-threonyl-[protein] + ATP = O-phospho-L-threonyl-[protein] + ADP + H(+). Its function is as follows. May be involved in osteoblast differentiation. The chain is BMP-2-inducible protein kinase (BMP2K) from Homo sapiens (Human).